We begin with the raw amino-acid sequence, 108 residues long: UPF0102 protein Shewmr4_3685 (108 aa).

This sequence belongs to the UPF0102 family.

The chain is UPF0102 protein Shewmr4_3685 from Shewanella sp. (strain MR-4).